We begin with the raw amino-acid sequence, 168 residues long: GPI-anchored protein LLG1 (168 aa).

The signal sequence occupies residues 1 to 23 (MELLSRALFFFLLLSVLSSFSSS). A glycan (N-linked (GlcNAc...) asparagine) is linked at N57. The GPI-anchor amidated asparagine moiety is linked to residue N144. Residues 145-168 (AATTSSSRLWLTVSAALLVFVKLF) constitute a propeptide, removed in mature form.

In terms of assembly, interacts with FER. Expressed in pollen, pollen tubes, sporophytic pistil tissues, in the early stages of female gametophyte development, and in unfertilized, mature ovules. Expressed in roots, lateral roots, shoots, cotyledons, petioles, developing leaves and anther filaments.

It is found in the cell membrane. Its function is as follows. Component of the FER-regulated Rho GTPase signaling complex. Acts as a chaperone and coreceptor for FER. Required for localization of FER to the plasma membrane. This Arabidopsis thaliana (Mouse-ear cress) protein is GPI-anchored protein LLG1.